Consider the following 1502-residue polypeptide: G patch domain-containing protein 8 (1502 aa).

Positions 40-86 (SDNIGHRLLQKHGWKLGQGLGKSLQGRTDPIPIVVKYDVMGMGRMEM) constitute a G-patch domain. Residues 89–124 (DYAEDATERRRVLEVEKEDTEELRQKYKDYVDKEKA) are a coiled coil. The C2H2-type zinc finger occupies 136–160 (FYCELCDKQYQKHQEFDNHINSYDH). A disordered region spans residues 172–251 (REFARNVSSR…GATASCGLGS (80 aa)). Residues 182-206 (SRKDEKKQEKALRRLHELAEQRKQA) are compositionally biased toward basic and acidic residues. The span at 223 to 233 (VDEEGGEDDKD) shows a compositional bias: acidic residues. A Glycyl lysine isopeptide (Lys-Gly) (interchain with G-Cter in SUMO2) cross-link involves residue lysine 311. Basic and acidic residues-rich tracts occupy residues 323 to 339 (AEEG…EKSS) and 424 to 436 (NTTH…ESKK). Disordered stretches follow at residues 323–391 (AEEG…ATEP) and 419–541 (QMDG…FPVL). Polar residues predominate over residues 459 to 472 (SEVSEQPKETSMTE). Lysine 479 is subject to N6-acetyllysine. Residue serine 491 is modified to Phosphoserine. Polar residues predominate over residues 491-519 (SDQSLESHSQKVSETQMCESNSSKETSLA). Lysine 577 is covalently cross-linked (Glycyl lysine isopeptide (Lys-Gly) (interchain with G-Cter in SUMO2)). Basic and acidic residues-rich tracts occupy residues 579-623 (SRNK…EKIV) and 653-670 (SETE…ERSG). A disordered region spans residues 579–1301 (SRNKDARTKG…ESTDGAEDAS (723 aa)). Serine 653 is modified (phosphoserine). Residues 671 to 692 (KSHRHKKKKKHKKSSKHKRKHK) show a composition bias toward basic residues. Over residues 693-707 (ADTEEKSSKAESGEK) the composition is skewed to basic and acidic residues. Positions 708-720 (SKKRKKRKRKKNK) are enriched in basic residues. The span at 733–743 (PEPPGSGSPAP) shows a compositional bias: pro residues. Phosphoserine occurs at positions 738, 740, and 758. A compositionally biased stretch (basic and acidic residues) spans 750–772 (AQDDSQRRSLPAEEGSSGKKDEG). Basic residues-rich tracts occupy residues 799–809 (AGTKRSSRSSH) and 852–867 (SRSR…RSSR). Positions 868–896 (RSYSSSSDASSDQSCYSRQRSYSDDSYSD) are enriched in low complexity. Residues serine 911 and serine 914 each carry the phosphoserine modification. The segment covering 919–928 (SKHRSKRHKY) has biased composition (basic residues). Residues serine 981, serine 1009, serine 1014, serine 1033, and serine 1035 each carry the phosphoserine modification. Residues 1010 to 1027 (WGHESPEERHSGRRDFIR) show a composition bias toward basic and acidic residues. Over residues 1042 to 1059 (GRGEGPGKKDDGRGDDSK) the composition is skewed to basic and acidic residues. Phosphoserine is present on serine 1081. Basic and acidic residues-rich tracts occupy residues 1093-1108 (LLEK…KPSV) and 1159-1171 (KKCE…RGEE). Lysine 1105 is covalently cross-linked (Glycyl lysine isopeptide (Lys-Gly) (interchain with G-Cter in SUMO2)). Serine 1107 carries the post-translational modification Phosphoserine. Phosphoserine is present on serine 1175.

This is G patch domain-containing protein 8 (GPATCH8) from Homo sapiens (Human).